A 111-amino-acid chain; its full sequence is U-scoloptoxin(16)-Sm2a (111 aa).

Residues 1-28 form the signal peptide; it reads MCAKPNHLFVTVTFIFGFAVCIVQISAW.

It belongs to the scoloptoxin-16 family. In terms of processing, contains 4 disulfide bonds. Expressed by the venom gland.

Its subcellular location is the secreted. This Scolopendra morsitans (Tanzanian blue ringleg centipede) protein is U-scoloptoxin(16)-Sm2a.